The sequence spans 561 residues: Carboxylesterase 4A (561 aa).

An N-terminal signal peptide occupies residues 1–20 (MRWILCWSLTLCLMAQTALG). The cysteines at positions 88 and 116 are disulfide-linked. N214 carries N-linked (GlcNAc...) asparagine glycosylation. S221 functions as the Acyl-ester intermediate in the catalytic mechanism. A disulfide bridge connects residues C273 and C284. N276 carries N-linked (GlcNAc...) asparagine glycosylation. Catalysis depends on E353, which acts as the Charge relay system. Residue N388 is glycosylated (N-linked (GlcNAc...) asparagine). H467 functions as the Charge relay system in the catalytic mechanism.

The protein belongs to the type-B carboxylesterase/lipase family.

It localises to the secreted. In terms of biological role, probable carboxylesterase. This is Carboxylesterase 4A (CES4A) from Homo sapiens (Human).